A 296-amino-acid polypeptide reads, in one-letter code: Lipoyl synthase (296 aa).

7 residues coordinate [4Fe-4S] cluster: C37, C42, C48, C63, C67, C70, and S276. Residues 49–265 (WSKKHATMMI…ERVARTKGFL (217 aa)) enclose the Radical SAM core domain.

The protein belongs to the radical SAM superfamily. Lipoyl synthase family. Requires [4Fe-4S] cluster as cofactor.

Its subcellular location is the cytoplasm. It carries out the reaction [[Fe-S] cluster scaffold protein carrying a second [4Fe-4S](2+) cluster] + N(6)-octanoyl-L-lysyl-[protein] + 2 oxidized [2Fe-2S]-[ferredoxin] + 2 S-adenosyl-L-methionine + 4 H(+) = [[Fe-S] cluster scaffold protein] + N(6)-[(R)-dihydrolipoyl]-L-lysyl-[protein] + 4 Fe(3+) + 2 hydrogen sulfide + 2 5'-deoxyadenosine + 2 L-methionine + 2 reduced [2Fe-2S]-[ferredoxin]. The protein operates within protein modification; protein lipoylation via endogenous pathway; protein N(6)-(lipoyl)lysine from octanoyl-[acyl-carrier-protein]: step 2/2. Its function is as follows. Catalyzes the radical-mediated insertion of two sulfur atoms into the C-6 and C-8 positions of the octanoyl moiety bound to the lipoyl domains of lipoate-dependent enzymes, thereby converting the octanoylated domains into lipoylated derivatives. The chain is Lipoyl synthase from Rickettsia canadensis (strain McKiel).